A 192-amino-acid polypeptide reads, in one-letter code: Ion-translocating oxidoreductase complex subunit A (192 aa).

Transmembrane regions (helical) follow at residues 5-25 (LLLLISTVLVNNFVLVKFLGL), 39-59 (IGMSMATTFVLTLASILSYLV), 65-85 (LPFDLSYLRTMSFILVIAVVV), 102-122 (ALGIYLPLITTNCAVLGVALL), 134-154 (AIFGFGAALGFSLVLILFSAM), and 171-191 (AIAMITAGLMSLAFMGFTGLV).

The protein belongs to the NqrDE/RnfAE family. As to quaternary structure, the complex is composed of six subunits: RnfA, RnfB, RnfC, RnfD, RnfE and RnfG.

It is found in the cell inner membrane. Its function is as follows. Part of a membrane-bound complex that couples electron transfer with translocation of ions across the membrane. The chain is Ion-translocating oxidoreductase complex subunit A from Shewanella baltica (strain OS223).